The following is a 612-amino-acid chain: Alpha-glycerophosphate oxidase (612 aa).

21-49 (DLLIIGGGITGAGVALQAAASGLDTGLIE) is an FAD binding site. The segment covering 399–408 (ETSTSEKELD) has biased composition (basic and acidic residues). Positions 399 to 418 (ETSTSEKELDPSAVSRGSSF) are disordered.

The protein belongs to the FAD-dependent glycerol-3-phosphate dehydrogenase family. The cofactor is FAD.

It localises to the cytoplasm. The catalysed reaction is sn-glycerol 3-phosphate + O2 = dihydroxyacetone phosphate + H2O2. The polypeptide is Alpha-glycerophosphate oxidase (glpO) (Streptococcus pyogenes serotype M1).